We begin with the raw amino-acid sequence, 41 residues long: MKVRNSLKSLRSRHRNNRLVRRKGRVYVINKVQRRFKARQG.

It belongs to the bacterial ribosomal protein bL36 family.

This chain is Large ribosomal subunit protein bL36, found in Rhodopseudomonas palustris (strain BisA53).